The following is a 325-amino-acid chain: Probable isoaspartyl peptidase/L-asparaginase 2 (325 aa).

The active-site Nucleophile is the T195. Substrate contacts are provided by residues 223–226 and 245–248; these read RIGD and TGEG.

The protein belongs to the Ntn-hydrolase family. Heterotetramer of two alpha and two beta chains arranged as a dimer of alpha/beta heterodimers. Post-translationally, cleaved into an alpha and beta chain by autocatalysis; this activates the enzyme. The N-terminal residue of the beta subunit is responsible for the nucleophile hydrolase activity.

It catalyses the reaction Cleavage of a beta-linked Asp residue from the N-terminus of a polypeptide.. Functionally, acts in asparagine catabolism and also in the final steps of protein degradation via hydrolysis of a range of isoaspartyl dipeptides. In Arabidopsis thaliana (Mouse-ear cress), this protein is Probable isoaspartyl peptidase/L-asparaginase 2.